A 234-amino-acid polypeptide reads, in one-letter code: Covalently-linked cell wall protein 14 (234 aa).

Positions 1–22 are cleaved as a signal peptide; it reads MASFLKISTLIAIVSTLQTTLA. Positions 23–109 constitute a CFEM domain; it reads APPACLLACV…SSEESSASAS (87 aa). 4 disulfides stabilise this stretch: C27-C66, C31-C61, C41-C49, and C51-C82. Residue D46 participates in heme binding. Residues 86–207 are compositionally biased toward low complexity; it reads SSQSSSSESE…ASSSESTTAT (122 aa). Residues 86–208 form a disordered region; that stretch reads SSQSSSSESE…SSSESTTATG (123 aa). A lipid anchor (GPI-anchor amidated glycine) is attached at G215. The propeptide at 216–234 is removed in mature form; that stretch reads SAAKVGLGALVGLVGAVLL.

The protein belongs to the CCW14 family. In terms of processing, the GPI-anchor is attached to the protein in the endoplasmic reticulum and serves to target the protein to the cell surface. There, the glucosamine-inositol phospholipid moiety is cleaved off and the GPI-modified mannoprotein is covalently attached via its lipidless GPI glycan remnant to the 1,6-beta-glucan of the outer cell wall layer.

The protein localises to the secreted. It is found in the cell wall. It localises to the membrane. In terms of biological role, beta-glucan associated cell wall protein involved in cell wall structure. May serve as cross-linking or coat-forming wall protein. The sequence is that of Covalently-linked cell wall protein 14 (SSR1) from Candida albicans (strain SC5314 / ATCC MYA-2876) (Yeast).